The following is a 146-amino-acid chain: UPF0735 ACT domain-containing protein Cphy_3604 (146 aa).

An ACT domain is found at 70–145 (TFMLQMDDIP…GIHYLKILGR (76 aa)).

This sequence belongs to the UPF0735 family.

The protein is UPF0735 ACT domain-containing protein Cphy_3604 of Lachnoclostridium phytofermentans (strain ATCC 700394 / DSM 18823 / ISDg) (Clostridium phytofermentans).